The following is a 1248-amino-acid chain: ATP-dependent helicase/nuclease subunit A (1248 aa).

The UvrD-like helicase ATP-binding domain occupies 4-480 (TKWTKEQYAA…ILLFKNFRSR (477 aa)). An ATP-binding site is contributed by 25 to 32 (AAAGAGKT). Positions 523 to 820 (ETVVGGAIEL…RLMSIHKSKG (298 aa)) constitute a UvrD-like helicase C-terminal domain.

Belongs to the helicase family. AddA subfamily. In terms of assembly, heterodimer of AddA and AddB/RexB. The cofactor is Mg(2+).

The enzyme catalyses Couples ATP hydrolysis with the unwinding of duplex DNA by translocating in the 3'-5' direction.. The catalysed reaction is ATP + H2O = ADP + phosphate + H(+). In terms of biological role, the heterodimer acts as both an ATP-dependent DNA helicase and an ATP-dependent, dual-direction single-stranded exonuclease. Recognizes the chi site generating a DNA molecule suitable for the initiation of homologous recombination. The AddA nuclease domain is required for chi fragment generation; this subunit has the helicase and 3' -&gt; 5' nuclease activities. This chain is ATP-dependent helicase/nuclease subunit A, found in Ruminiclostridium cellulolyticum (strain ATCC 35319 / DSM 5812 / JCM 6584 / H10) (Clostridium cellulolyticum).